The chain runs to 308 residues: Tetraacyldisaccharide 4'-kinase (308 aa).

63 to 70 (SFGGNGKT) serves as a coordination point for ATP.

The protein belongs to the LpxK family.

It carries out the reaction a lipid A disaccharide + ATP = a lipid IVA + ADP + H(+). It participates in glycolipid biosynthesis; lipid IV(A) biosynthesis; lipid IV(A) from (3R)-3-hydroxytetradecanoyl-[acyl-carrier-protein] and UDP-N-acetyl-alpha-D-glucosamine: step 6/6. Its function is as follows. Transfers the gamma-phosphate of ATP to the 4'-position of a tetraacyldisaccharide 1-phosphate intermediate (termed DS-1-P) to form tetraacyldisaccharide 1,4'-bis-phosphate (lipid IVA). The polypeptide is Tetraacyldisaccharide 4'-kinase (Campylobacter jejuni subsp. doylei (strain ATCC BAA-1458 / RM4099 / 269.97)).